Here is a 541-residue protein sequence, read N- to C-terminus: MARCRHHSGYLADDEAAHSTYVAPLPKKHLLPEMRPTCKLGRVPHLPSMNQYSEHQSHQQNFRHPLAFGGFLDFLTEGQVLDSLQTVVEQATERLAAMKTEAGVPLVDIQDPVEVPSSRHRSRARPSIDTVHRHRARPTLCAGRPNNYPSCSSSMSDSHSSITAGWLGSHSQDSDLGARGIGSLPPMRDKLLLEKNLKRLLRLENKGKILNQSCSQRDSLLWDSLGSQTSSQWTREQPLSWFSGLLGSSPATPETSELGLGEQEMIFLKQKLNKEMKSLLNQPRPFNLPTYCPLREPHHTLDFLAKHRLFPALQRVVSQAVDKLSHACRHNGFPLFPVTSETIPDLPGNSDLLQPSSKASIPTNREARGEPCDSLTTAYSPKTSHRKSKGRRGSPPNAVQMATRFRLKVTPTQVSNVPISSFHSMQEAPNSEPKLQKQAMASNCNHISQPCHGLHLTLPAPGITVEVASCQGRLRGPVQHRLASPCCLHSHFPFPLFPPFLSLGKSFSTSPPTLHPEVTSRAGLEVLEQPLKGRGSFTHHF.

Residues 79 to 102 (QVLDSLQTVVEQATERLAAMKTEA) are a coiled coil. A disordered region spans residues 346–397 (LPGNSDLLQPSSKASIPTNREARGEPCDSLTTAYSPKTSHRKSKGRRGSPPN). The span at 351-363 (DLLQPSSKASIPT) shows a compositional bias: polar residues. Positions 383–392 (TSHRKSKGRR) are enriched in basic residues. Serine 394 is subject to Phosphoserine.

The protein localises to the cytoplasm. The protein resides in the cytoskeleton. It is found in the microtubule organizing center. Its subcellular location is the centrosome. This chain is Coiled-coil domain-containing protein 116 (Ccdc116), found in Mus musculus (Mouse).